Consider the following 1186-residue polypeptide: Partner and localizer of BRCA2 (1186 aa).

Positions 1–160 (MDEPPGKPLS…QKRTFISQER (160 aa)) are required for its oligomerization and is important for its focal concentration at DNA damage sites. An interaction with RAD51 region spans residues 1–200 (MDEPPGKPLS…PVTEIRTHLL (200 aa)). The tract at residues 1 to 319 (MDEPPGKPLS…SKSGQLPTSS (319 aa)) is interaction with BRCA1. The DNA-binding (with the preference D loop &gt; dsDNA &gt; ssDNA) stretch occupies residues 1–579 (MDEPPGKPLS…EDSLSWSNSA (579 aa)). Residues 9–41 (LSCEEKEKLKEKLAFLKREYSKTLARLQRAQRA) are a coiled coil. Disordered stretches follow at residues 52–72 (VEEQDCLSQQDLSPQLKHSEP) and 95–157 (KTSI…TFIS). Over residues 120-141 (RTDDTQEHFPHRVSDPSGEQKQ) the composition is skewed to basic and acidic residues. The span at 143–152 (LPSRRKKQQK) shows a compositional bias: basic residues. 2 positions are modified to phosphoserine: serine 172 and serine 190. The interval 252-273 (TLSDSGSSQHLEHIPPKGSSEL) is disordered. Position 285 is a phosphoserine (serine 285). Residues 346–365 (KEQNQTEKSLKSPSDTLDGR) are disordered. Serine 376 and serine 387 each carry phosphoserine. The segment at 395–446 (SCTVPEGLLFPAEYYVRTTRSMSNCQRKVAVEAVIQSHLDVKKKGFKNKNKD) is chAM (Chromatin-association motif); required for chromatin association, mediates nucleosome association. The disordered stretch occupies residues 440–525 (FKNKNKDASK…RKSACTPASD (86 aa)). Residue serine 454 is modified to Phosphoserine. Polar residues predominate over residues 467-488 (GTCTGQPSSRTSQKLLSLTKVS). Residue serine 660 is modified to Phosphoserine. Disordered regions lie at residues 679-698 (PGKSHPKRPNSQSQHTKTGL) and 774-798 (KQFDSSGSPAKPHTTLQVSGRQGQP). A compositionally biased stretch (polar residues) spans 687-698 (PNSQSQHTKTGL). The required for interaction with POLH and POLH DNA synthesis stimulation stretch occupies residues 775-1186 (QFDSSGSPAK…DGNIFVYHYS (412 aa)). Phosphoserine is present on serine 781. Positions 853–1186 (GNLQLVSELK…DGNIFVYHYS (334 aa)) are interaction with RAD51, BRCA2 and POLH. WD repeat units lie at residues 854-915 (NLQL…WHFA), 917-961 (VPVL…QVLL), 962-1009 (KSGN…LMPP), 1010-1052 (EETI…MHID), 1058-1109 (SVCH…MLYC), 1115-1153 (AGRFLEGDVKDHCAAAILTSGTIAIWDLLLGQCTALLPP), and 1155-1186 (SDQHWSFVKWSGTDSHLLAGQKDGNIFVYHYS).

Homooligomer; dissociated upon DNA damage thus allowing association with BRCA1. Oligomerization is essential for its focal accumulation at DNA breaks. Part of a BRCA complex containing BRCA1, BRCA2 and PALB2. Interacts with BRCA1 and this interaction is essential for its function in HRR. Interacts with RAD51AP1 and MORF4L1/MRG15. Component of the homologous recombination repair (HR) complex composed of ERCC5/XPG, BRCA2, PALB2, DSS1 and RAD51. Within the complex, interacts with ERCC5/XPG and BRCA2. Interacts with BRCA2, RAD51C, RAD51 and XRCC3; the interactions are direct and it may serve as a scaffold for a HR complex containing PALB2, BRCA2, RAD51C, RAD51 and XRCC3. Interacts with POLH; the interaction is direct.

It is found in the nucleus. Plays a critical role in homologous recombination repair (HRR) through its ability to recruit BRCA2 and RAD51 to DNA breaks. Strongly stimulates the DNA strand-invasion activity of RAD51, stabilizes the nucleoprotein filament against a disruptive BRC3-BRC4 polypeptide and helps RAD51 to overcome the suppressive effect of replication protein A (RPA). Functionally cooperates with RAD51AP1 in promoting of D-loop formation by RAD51. Serves as the molecular scaffold in the formation of the BRCA1-PALB2-BRCA2 complex which is essential for homologous recombination. Via its WD repeats is proposed to scaffold a HR complex containing RAD51C and BRCA2 which is thought to play a role in HR-mediated DNA repair. Essential partner of BRCA2 that promotes the localization and stability of BRCA2. Also enables its recombinational repair and checkpoint functions of BRCA2. May act by promoting stable association of BRCA2 with nuclear structures, allowing BRCA2 to escape the effects of proteasome-mediated degradation. Binds DNA with high affinity for D loop, which comprises single-stranded, double-stranded and branched DNA structures. May play a role in the extension step after strand invasion at replication-dependent DNA double-strand breaks; together with BRCA2 is involved in both POLH localization at collapsed replication forks and DNA polymerization activity. In Homo sapiens (Human), this protein is Partner and localizer of BRCA2 (PALB2).